We begin with the raw amino-acid sequence, 180 residues long: Large ribosomal subunit protein uL5 (180 aa).

It belongs to the universal ribosomal protein uL5 family. In terms of assembly, part of the 50S ribosomal subunit; part of the 5S rRNA/L5/L18/L25 subcomplex. Contacts the 5S rRNA and the P site tRNA. Forms a bridge to the 30S subunit in the 70S ribosome.

Its function is as follows. This is one of the proteins that bind and probably mediate the attachment of the 5S RNA into the large ribosomal subunit, where it forms part of the central protuberance. In the 70S ribosome it contacts protein S13 of the 30S subunit (bridge B1b), connecting the 2 subunits; this bridge is implicated in subunit movement. Contacts the P site tRNA; the 5S rRNA and some of its associated proteins might help stabilize positioning of ribosome-bound tRNAs. This chain is Large ribosomal subunit protein uL5, found in Clostridium tetani (strain Massachusetts / E88).